Here is a 338-residue protein sequence, read N- to C-terminus: 1-aminocyclopropane-1-carboxylate deaminase (338 aa).

Lys-51 is subject to N6-(pyridoxal phosphate)lysine. Ser-78 serves as the catalytic Nucleophile.

The protein belongs to the ACC deaminase/D-cysteine desulfhydrase family. In terms of assembly, homotrimer. Pyridoxal 5'-phosphate is required as a cofactor.

The enzyme catalyses 1-aminocyclopropane-1-carboxylate + H2O = 2-oxobutanoate + NH4(+). Catalyzes a cyclopropane ring-opening reaction, the irreversible conversion of 1-aminocyclopropane-1-carboxylate (ACC) to ammonia and alpha-ketobutyrate. Allows growth on ACC as a nitrogen source. The polypeptide is 1-aminocyclopropane-1-carboxylate deaminase (Acidovorax ebreus (strain TPSY) (Diaphorobacter sp. (strain TPSY))).